The following is a 410-amino-acid chain: MKTEIINRFISYAQVDTQSDENSETCPSTPGQLVLAQMLVGELKAIGMQEVTMDSNGYVMATLPSNTDKEIPTIGFLAHMDTATDFTGADVKPQVIENYNGQDIVLNEALNIVLSPQEFPELAGYKGHTIITTDGTTLLGADDKAGIAEIMTAMDYLIRHPELKHGKVRVAFTPDEEIGRGPDKFDVSAFDAVYAYTMDGGPLGGIEYESFHAASATITCKGTNVHPGSAKGKMVNAAKIAMELHGKLPANETTEETEGYEGFYHLSSIQGDVEQTQLRYLIRDHDRNRFQERKSELARIVEELQKTYGEKRIELEIKDEYFNMREKIEPVMEVVDIATQALENLGIVPNIQPIRGGTDGSQLSYMGLPTPNIFTGGENYHGRFEYVSVDNMMHAVNTIIEIVKLYEQRA.

H79 contacts Zn(2+). The active site involves D81. D142 contributes to the Zn(2+) binding site. The Proton acceptor role is filled by E176. Positions 177, 199, and 381 each coordinate Zn(2+).

The protein belongs to the peptidase M20B family. Zn(2+) is required as a cofactor.

It is found in the cytoplasm. It catalyses the reaction Release of the N-terminal residue from a tripeptide.. In terms of biological role, cleaves the N-terminal amino acid of tripeptides. The polypeptide is Peptidase T (Brevibacillus brevis (strain 47 / JCM 6285 / NBRC 100599)).